The sequence spans 54 residues: MPKGNRTIIHLVSSAGTGYVYTTTKNKRKSQEKLQLRKYDPRVRKHVLFVEGKP.

This sequence belongs to the bacterial ribosomal protein bL33 family.

This is Large ribosomal subunit protein bL33B from Myxococcus xanthus (strain DK1622).